Consider the following 104-residue polypeptide: Probable head completion protein 1 (104 aa).

This sequence belongs to the skunalikevirus head completion protein 1 family.

It localises to the virion. Functionally, probable head completion protein that exhibits an open central channel for viral DNA ejection. Part of the head-tail connector by binding to the portal protein and to the head completion protein 2. Plays a role in morphogenesis of the virion capsid after genome packaging. This Lactococcus lactis (Lactococcus lactis bacteriophage p2) protein is Probable head completion protein 1.